The following is a 578-amino-acid chain: Putative diflavin flavoprotein A 2 (578 aa).

The tract at residues 39–233 (QQGTTSNSYL…PPPRLYAPAH (195 aa)) is zinc metallo-hydrolase. Residues 262–404 (VALFYASAYG…AANEFAQALK (143 aa)) form the Flavodoxin-like domain. A flavodoxin-reductase-like region spans residues 429–578 (VNRVVGSLCV…TAIQHRKTSS (150 aa)).

This sequence in the N-terminal section; belongs to the zinc metallo-hydrolase group 3 family. It in the C-terminal section; belongs to the flavodoxin reductase family. The cofactor is Fe cation.

Mediates electron transfer from NADH to oxygen, reducing it to water. This modular protein has 3 redox cofactors, in other organisms the same activity requires 2 or 3 proteins. The chain is Putative diflavin flavoprotein A 2 (dfa2) from Thermosynechococcus vestitus (strain NIES-2133 / IAM M-273 / BP-1).